We begin with the raw amino-acid sequence, 1304 residues long: DNA-directed RNA polymerase subunit beta' (1304 aa).

Positions 60, 62, 75, and 78 each coordinate Zn(2+). Mg(2+) contacts are provided by D541, D543, and D545. Residues C887, C963, C970, and C973 each contribute to the Zn(2+) site.

This sequence belongs to the RNA polymerase beta' chain family. The RNAP catalytic core consists of 2 alpha, 1 beta, 1 beta' and 1 omega subunit. When a sigma factor is associated with the core the holoenzyme is formed, which can initiate transcription. The cofactor is Mg(2+). It depends on Zn(2+) as a cofactor.

The catalysed reaction is RNA(n) + a ribonucleoside 5'-triphosphate = RNA(n+1) + diphosphate. DNA-dependent RNA polymerase catalyzes the transcription of DNA into RNA using the four ribonucleoside triphosphates as substrates. This Acidothermus cellulolyticus (strain ATCC 43068 / DSM 8971 / 11B) protein is DNA-directed RNA polymerase subunit beta'.